Consider the following 343-residue polypeptide: S-adenosylmethionine:tRNA ribosyltransferase-isomerase (343 aa).

It belongs to the QueA family. Monomer.

The protein localises to the cytoplasm. The enzyme catalyses 7-aminomethyl-7-carbaguanosine(34) in tRNA + S-adenosyl-L-methionine = epoxyqueuosine(34) in tRNA + adenine + L-methionine + 2 H(+). Its pathway is tRNA modification; tRNA-queuosine biosynthesis. In terms of biological role, transfers and isomerizes the ribose moiety from AdoMet to the 7-aminomethyl group of 7-deazaguanine (preQ1-tRNA) to give epoxyqueuosine (oQ-tRNA). The polypeptide is S-adenosylmethionine:tRNA ribosyltransferase-isomerase (Borreliella burgdorferi (strain ATCC 35210 / DSM 4680 / CIP 102532 / B31) (Borrelia burgdorferi)).